A 392-amino-acid polypeptide reads, in one-letter code: Protein O-glucosyltransferase 1 (392 aa).

The N-terminal stretch at 1 to 23 (MERLSGCRLRPWMLLLLLFPVQG) is a signal peptide. Disulfide bonds link Cys-49/Cys-56, Cys-54/Cys-357, Cys-102/Cys-108, and Cys-263/Cys-286. Residue Asn-53 is glycosylated (N-linked (GlcNAc...) asparagine). The interval 103–107 (MFPSR) is interaction with the consensus sequence C-X-S-X-[PA]-C in peptide substrates. Asp-133 (proton donor/acceptor) is an active-site residue. Residues 172–178 (AVWPLYP) are interaction with the consensus sequence C-X-S-X-[PA]-C in peptide substrates. Tyr-177 contacts UDP-alpha-D-glucose. Asn-204 is a glycosylation site (N-linked (GlcNAc...) asparagine). UDP-alpha-D-glucose-binding positions include Ser-212, Arg-218, and 274–279 (VAASFR). N-linked (GlcNAc...) asparagine glycosylation occurs at Asn-373. Positions 389–392 (KTEL) match the Prevents secretion from ER motif.

It belongs to the glycosyltransferase 90 family.

It is found in the endoplasmic reticulum lumen. The enzyme catalyses L-seryl-[EGF-like domain protein] + UDP-alpha-D-xylose = 3-O-(beta-D-xylosyl)-L-seryl-[EGF-like domain protein] + UDP + H(+). It catalyses the reaction L-seryl-[EGF-like domain protein] + UDP-alpha-D-glucose = 3-O-(beta-D-glucosyl)-L-seryl-[EGF-like domain protein] + UDP + H(+). It functions in the pathway protein modification; protein glycosylation. Functionally, dual specificity glycosyltransferase that catalyzes the transfer of glucose and xylose from UDP-glucose and UDP-xylose, respectively, to a serine residue found in the consensus sequence of C-X-S-X-P-C. Specifically targets extracellular EGF repeats of protein such as CRB2, F7, F9 and NOTCH2. Acts as a positive regulator of Notch signaling by mediating O-glucosylation of Notch, leading to regulate muscle development. Notch glucosylation does not affect Notch ligand binding. Required during early development to promote gastrulation: acts by mediating O-glucosylation of CRB2, which is required for CRB2 localization to the cell membrane. This Rattus norvegicus (Rat) protein is Protein O-glucosyltransferase 1 (Poglut1).